Consider the following 1005-residue polypeptide: PH and SEC7 domain-containing protein 4 (1005 aa).

A disordered region spans residues 27-66 (YPSEIHGHPGPSEPCQEHTCPFDPPESARPDAPHGNSGVE). A phosphoserine mark is found at serine 85, serine 88, and serine 97. 4 disordered regions span residues 145–189 (PSKD…PGSS), 287–386 (LALG…NRGE), 407–525 (TSLL…SSSR), and 694–714 (EEDA…KISS). A compositionally biased stretch (acidic residues) spans 161-177 (EEDEDSGDDSSGPEEEN). Residues 350–361 (SQTSQSLSDLTQ) show a composition bias toward low complexity. Phosphoserine is present on residues serine 381 and serine 435. The span at 428–438 (PVSSQDSSPRV) shows a compositional bias: low complexity. Basic and acidic residues-rich tracts occupy residues 453-465 (LQKD…SLKE) and 476-488 (QEAE…RSED). Residues 493 to 686 (QHHVHLASAE…KALYWSIRSE (194 aa)) form the SEC7 domain. One can recognise a PH domain in the interval 726-841 (PTYKQGILAR…WIARINLAAA (116 aa)). Residues 870 to 926 (SSLEEQHRSHENCLDAASDDLLDLQRNLPERRGRSRELEEYRLRKEYLEHEKTRYET) adopt a coiled-coil conformation. The tract at residues 951–1005 (KETDGSQEPRPSLKKSHSSPSLHQEEAPTTAKVKRNISERRTYRKIIPKRNRNQL) is disordered. Residues serine 968 and serine 971 each carry the phosphoserine modification. Basic residues predominate over residues 992–1005 (TYRKIIPKRNRNQL).

It localises to the cell membrane. It is found in the cell projection. The protein resides in the ruffle membrane. Guanine nucleotide exchange factor for ARF6 and ARL14/ARF7. Through ARL14 activation, controls the movement of MHC class II-containing vesicles along the actin cytoskeleton in dendritic cells. Involved in membrane recycling. Interacts with several phosphatidylinositol phosphate species, including phosphatidylinositol 3,4-bisphosphate, phosphatidylinositol 3,5-bisphosphate and phosphatidylinositol 4,5-bisphosphate. The chain is PH and SEC7 domain-containing protein 4 (Psd4) from Mus musculus (Mouse).